The sequence spans 375 residues: Succinyl-diaminopimelate desuccinylase (375 aa).

Residue His75 coordinates Zn(2+). Residue Asp77 is part of the active site. Asp106 lines the Zn(2+) pocket. The Proton acceptor role is filled by Glu136. Residues Glu137, Glu165, and His348 each coordinate Zn(2+).

This sequence belongs to the peptidase M20A family. DapE subfamily. In terms of assembly, homodimer. Zn(2+) serves as cofactor. It depends on Co(2+) as a cofactor.

It catalyses the reaction N-succinyl-(2S,6S)-2,6-diaminopimelate + H2O = (2S,6S)-2,6-diaminopimelate + succinate. It functions in the pathway amino-acid biosynthesis; L-lysine biosynthesis via DAP pathway; LL-2,6-diaminopimelate from (S)-tetrahydrodipicolinate (succinylase route): step 3/3. In terms of biological role, catalyzes the hydrolysis of N-succinyl-L,L-diaminopimelic acid (SDAP), forming succinate and LL-2,6-diaminopimelate (DAP), an intermediate involved in the bacterial biosynthesis of lysine and meso-diaminopimelic acid, an essential component of bacterial cell walls. In Novosphingobium aromaticivorans (strain ATCC 700278 / DSM 12444 / CCUG 56034 / CIP 105152 / NBRC 16084 / F199), this protein is Succinyl-diaminopimelate desuccinylase.